We begin with the raw amino-acid sequence, 510 residues long: NADP-dependent fatty aldehyde dehydrogenase (510 aa).

Position 229–234 (229–234 (GSVGGG)) interacts with NADP(+). Residues glutamate 253 and cysteine 289 contribute to the active site.

This sequence belongs to the aldehyde dehydrogenase family. As to quaternary structure, homodimer.

It carries out the reaction an aldehyde + NADP(+) + H2O = a carboxylate + NADPH + 2 H(+). In terms of biological role, catalyzes the oxidation of long-chain aliphatic aldehydes to acids. May be implicated in controlling luminescence as it catalyzes the oxidation of the fatty aldehyde substrate for the light-emitting reaction. The polypeptide is NADP-dependent fatty aldehyde dehydrogenase (aldH) (Vibrio harveyi (Beneckea harveyi)).